A 379-amino-acid chain; its full sequence is MTSQDRSEAVLVLADGRIFKGESFGAEGATLGEAVFTTAMSGYQETMTDPSYHRQIVVATAPQIGNTGWNDEDGESHGDKIWVAGLVIRDLSTAVSNWRAKRSLEDEMREQNIVGISGVDTRAIVRHLRNFGSVAAGIFSGEAAKQPHDELIEIVKSQPSMAGADLASEVSTQEAYVVEPDGEALYTVVAYDMGIKTNTPRNFSRRGIRTVVVPANTPAEDIAQYNPDGVFVSNGPGDPATADVMVGIVQEILAQKIPFFGICFGNQILGRALGMNTYKMKFGHRGINVPVLNHLTGKIDITAQNHGFALEGTALEQFDTPFGPAHVTHTCLNDDTVEGVALVNGLAYSVQYHPEAAAGPHDANPLFDQFVELIQANKK.

The CPSase stretch occupies residues 1-183 (MTSQDRSEAV…EAYVVEPDGE (183 aa)). S51, G235, and G237 together coordinate L-glutamine. Residues 185-379 (LYTVVAYDMG…FVELIQANKK (195 aa)) enclose the Glutamine amidotransferase type-1 domain. C263 acts as the Nucleophile in catalysis. The L-glutamine site is built by F264, Q267, N305, G307, and F308. Active-site residues include H353 and E355.

Belongs to the CarA family. As to quaternary structure, composed of two chains; the small (or glutamine) chain promotes the hydrolysis of glutamine to ammonia, which is used by the large (or ammonia) chain to synthesize carbamoyl phosphate. Tetramer of heterodimers (alpha,beta)4.

It catalyses the reaction hydrogencarbonate + L-glutamine + 2 ATP + H2O = carbamoyl phosphate + L-glutamate + 2 ADP + phosphate + 2 H(+). It carries out the reaction L-glutamine + H2O = L-glutamate + NH4(+). It functions in the pathway amino-acid biosynthesis; L-arginine biosynthesis; carbamoyl phosphate from bicarbonate: step 1/1. It participates in pyrimidine metabolism; UMP biosynthesis via de novo pathway; (S)-dihydroorotate from bicarbonate: step 1/3. Small subunit of the glutamine-dependent carbamoyl phosphate synthetase (CPSase). CPSase catalyzes the formation of carbamoyl phosphate from the ammonia moiety of glutamine, carbonate, and phosphate donated by ATP, constituting the first step of 2 biosynthetic pathways, one leading to arginine and/or urea and the other to pyrimidine nucleotides. The small subunit (glutamine amidotransferase) binds and cleaves glutamine to supply the large subunit with the substrate ammonia. The protein is Carbamoyl phosphate synthase small chain of Corynebacterium diphtheriae (strain ATCC 700971 / NCTC 13129 / Biotype gravis).